The primary structure comprises 943 residues: Nuclear factor of activated T-cells, cytoplasmic 1 (943 aa).

Residues 22–48 (GRGETLGPAPRAGGTMKSAEEEHYGYA) are disordered. A calcineurin-binding region spans residues 118 to 123 (PRIEIT). Positions 126–218 (LGLYHNNNQF…CVSPKTTDPE (93 aa)) are transactivation domain A (TAD-A). A disordered region spans residues 200–298 (PQTSPWQSPC…GSPRVSVTDD (99 aa)). The span at 201 to 214 (QTSPWQSPCVSPKT) shows a compositional bias: polar residues. A run of 2 repeats spans residues 203 to 219 (SPWQ…DPEE) and 233 to 249 (SPRH…VTEE). Residues 203-298 (SPWQSPCVSP…GSPRVSVTDD (96 aa)) are 3 X SP repeats. Phosphoserine is present on residues S233 and S237. The span at 236–248 (HSPSTSPRASVTE) shows a compositional bias: polar residues. Residue S245 is modified to Phosphoserine; by PKA. Residues 265–267 (KRK) carry the Nuclear localization signal motif. Residue S269 is modified to Phosphoserine; by PKA. A compositionally biased stretch (pro residues) spans 276–288 (PYSPHHSPTPSPH). Repeat unit 3 spans residues 282–298 (SPTPSPHGSPRVSVTDD). S294 carries the post-translational modification Phosphoserine; by PKA. The short motif at 310–321 (SAIVAAINALTT) is the Nuclear export signal element. In terms of domain architecture, RHD spans 410–592 (PTLPALDWQL…NPIECSQRSA (183 aa)). The DNA-binding element occupies 439–446 (RAHYETEG). Positions 682 to 684 (KRK) match the Nuclear localization signal motif. The segment at 703–943 (TEPTDDYEPA…NDLSSTSTHS (241 aa)) is transactivation domain B (TAD-B). The interval 787–912 (HLGLPQPAGE…SPNLAPIPVT (126 aa)) is disordered. Over residues 846–855 (SPSPPLPPAT) the composition is skewed to pro residues. The Nuclear export signal motif lies at 924–933 (YLDDVNEIIR).

Member of the multicomponent NFATC transcription complex that consists of at least two components, a pre-existing cytoplasmic component NFATC2 and an inducible nuclear component NFATC1. Other members such as NFATC4, NFATC3 or members of the activating protein-1 family, MAF, GATA4 and Cbp/p300 can also bind the complex. NFATC proteins bind to DNA as monomers. Interacts with HOMER2 and HOMER3; this interaction may compete with calcineurin/PPP3CA-binding and hence prevent NFATC1 dephosphorylation and activation. Interacts with TLE6/GRG6. Post-translationally, phosphorylated by NFATC-kinase and GSK3B; phosphorylation induces NFATC1 nuclear exit and dephosphorylation by calcineurin promotes nuclear import. Phosphorylation by PKA and DYRK2 negatively modulates nuclear accumulation, and promotes subsequent phosphorylation by GSK3B or casein kinase 1. In terms of tissue distribution, expressed in thymus, peripheral leukocytes as T-cells and spleen. Isoforms A are preferentially expressed in effector T-cells (thymus and peripheral leukocytes) whereas isoforms B and isoforms C are preferentially expressed in naive T-cells (spleen). Isoforms B are expressed in naive T-cells after first antigen exposure and isoforms A are expressed in effector T-cells after second antigen exposure. Isoforms IA are widely expressed but not detected in liver nor pancreas, neural expression is strongest in corpus callosum. Isoforms IB are expressed mostly in muscle, cerebellum, placenta and thymus, neural expression in fetal and adult brain, strongest in corpus callosum.

The protein localises to the cytoplasm. Its subcellular location is the nucleus. In terms of biological role, plays a role in the inducible expression of cytokine genes in T-cells, especially in the induction of the IL-2 or IL-4 gene transcription. Also controls gene expression in embryonic cardiac cells. Could regulate not only the activation and proliferation but also the differentiation and programmed death of T-lymphocytes as well as lymphoid and non-lymphoid cells. Required for osteoclastogenesis and regulates many genes important for osteoclast differentiation and function. In Homo sapiens (Human), this protein is Nuclear factor of activated T-cells, cytoplasmic 1 (NFATC1).